We begin with the raw amino-acid sequence, 700 residues long: Putative cysteine-rich receptor-like protein kinase 30 (700 aa).

An N-terminal signal peptide occupies residues 1-24 (MRQNNLFSLIFWLVPVSLIIVVSA). 2 Gnk2-homologous domains span residues 25–129 (QLCS…NQPS) and 135–250 (LESV…LYPF). At 25–285 (QLCSEKFGTF…KDEKTIHTGT (261 aa)) the chain is on the extracellular side. Asn63, Asn105, Asn146, Asn150, and Asn191 each carry an N-linked (GlcNAc...) asparagine glycan. The helical transmembrane segment at 286–306 (IIGIVIVVAMVIIMALLALGV) threads the bilayer. The Cytoplasmic segment spans residues 307-700 (SVCRSRKKYQ…SKSMYRNTED (394 aa)). A Protein kinase domain is found at 346-626 (FLASNKIGQG…IFQMLTNSSI (281 aa)). ATP-binding positions include 352 to 360 (IGQGGFGEV) and Lys374. Asp474 functions as the Proton acceptor in the catalytic mechanism. Ser478 is modified (phosphoserine). Position 514 is a phosphothreonine (Thr514). At Tyr522 the chain carries Phosphotyrosine.

It belongs to the protein kinase superfamily. Ser/Thr protein kinase family. CRK subfamily.

The protein localises to the membrane. The enzyme catalyses L-seryl-[protein] + ATP = O-phospho-L-seryl-[protein] + ADP + H(+). It carries out the reaction L-threonyl-[protein] + ATP = O-phospho-L-threonyl-[protein] + ADP + H(+). The protein is Putative cysteine-rich receptor-like protein kinase 30 (CRK30) of Arabidopsis thaliana (Mouse-ear cress).